A 353-amino-acid chain; its full sequence is N-acetyl-gamma-glutamyl-phosphate reductase (353 aa).

The active site involves Cys157.

Belongs to the NAGSA dehydrogenase family. Type 1 subfamily.

Its subcellular location is the cytoplasm. The enzyme catalyses N-acetyl-L-glutamate 5-semialdehyde + phosphate + NADP(+) = N-acetyl-L-glutamyl 5-phosphate + NADPH + H(+). The protein operates within amino-acid biosynthesis; L-arginine biosynthesis; N(2)-acetyl-L-ornithine from L-glutamate: step 3/4. Catalyzes the NADPH-dependent reduction of N-acetyl-5-glutamyl phosphate to yield N-acetyl-L-glutamate 5-semialdehyde. The polypeptide is N-acetyl-gamma-glutamyl-phosphate reductase (Bordetella avium (strain 197N)).